A 428-amino-acid polypeptide reads, in one-letter code: MSAIVDVIAREIIDSRGNPTIEADVLLESGVLGRASVPSGASVGTREAVELRDGDAQRYYGKGVLKAVESVNGEISETIMGLDAMEQCFIDKTLIELDGSENKSRLGANAILAVSLAVAKAAAEESGLPLYRYLGGINAKWLPVPMMNLVNGGVHANNRLDMQEFMIIPLGLPNLREAVRCGAEVFSTLRTLLNKRNLPTTVGDEGGFAPSFARNEEALALIVQAIDEAGYQPGSEVAIGVDCASSEFFREGKYHLDVDGLGLTSAQFVDYLATWVEKYPIISIEDGMSEQDWEGWGLLTERLGKTVQLVGDDVFVTNTRILKEGISRNIANSILIKINQIGTLTETLNAIEMAKCAGYTAIVSHRSGETEDTTIADIAVATNALQIKTGSLSRSDRLAKYNQLLRIEEDLGEMAQYAGRSAFYQLKP.

Q163 lines the (2R)-2-phosphoglycerate pocket. The active-site Proton donor is the E205. D242, E285, and D312 together coordinate Mg(2+). (2R)-2-phosphoglycerate-binding residues include K337, R366, S367, and K388. Catalysis depends on K337, which acts as the Proton acceptor.

This sequence belongs to the enolase family. Requires Mg(2+) as cofactor.

The protein resides in the cytoplasm. Its subcellular location is the secreted. It localises to the cell surface. It carries out the reaction (2R)-2-phosphoglycerate = phosphoenolpyruvate + H2O. The protein operates within carbohydrate degradation; glycolysis; pyruvate from D-glyceraldehyde 3-phosphate: step 4/5. In terms of biological role, catalyzes the reversible conversion of 2-phosphoglycerate (2-PG) into phosphoenolpyruvate (PEP). It is essential for the degradation of carbohydrates via glycolysis. This chain is Enolase, found in Nitrosomonas europaea (strain ATCC 19718 / CIP 103999 / KCTC 2705 / NBRC 14298).